Here is a 264-residue protein sequence, read N- to C-terminus: Apolipoprotein A-I (264 aa).

Positions 1-18 (MKAVVLAVAVLFLTGSQA) are cleaved as a signal peptide. 2 tandem repeats follow at residues 67 to 88 (LNLL…EQLG) and 89 to 110 (SVTK…QQMN). The 10 X approximate tandem repeats stretch occupies residues 67-264 (LNLLANWNTL…DQASKQLSAQ (198 aa)). Position 109 is a methionine sulfoxide (methionine 109). The stretch at 111–121 (KDLEEVKQKVQ) is one 3; half-length repeat. 5 repeat units span residues 122–142 (SYLD…RDKV), 144–165 (PLGK…EKLA), 166–187 (PLGQ…THLG), 188–208 (SYTQ…KESA), and 209–229 (PVSE…EKAK). Residue methionine 193 is modified to Methionine sulfoxide. The stretch at 230 to 240 (PALEDLRQGLM) is one 9; half-length repeat. Methionine 240 carries the post-translational modification Methionine sulfoxide. Repeat 10 spans residues 241-264 (PVMESLKASFLSSIDQASKQLSAQ).

This sequence belongs to the apolipoprotein A1/A4/E family. As to quaternary structure, homodimer. Interacts with APOA1BP and CLU. Component of a sperm activating protein complex (SPAP), consisting of APOA1, an immunoglobulin heavy chain, an immunoglobulin light chain and albumin. Interacts with NDRG1. Interacts with SCGB3A2. Interacts with NAXE and YJEFN3. Post-translationally, glycosylated. Palmitoylated. In terms of processing, phosphorylation sites are present in the extracellular medium. As to expression, major protein of plasma HDL, also found in chylomicrons.

The protein localises to the secreted. Participates in the reverse transport of cholesterol from tissues to the liver for excretion by promoting cholesterol efflux from tissues and by acting as a cofactor for the lecithin cholesterol acyltransferase (LCAT). As part of the SPAP complex, activates spermatozoa motility. In Heterocephalus glaber (Naked mole rat), this protein is Apolipoprotein A-I (Apoa1).